The primary structure comprises 911 residues: FIGNL1-interacting regulator of recombination and mitosis (911 aa).

Residues 830-853 (SEKSQPAQTPLTEEPCAKRARQET) are disordered. Over residues 844 to 853 (PCAKRARQET) the composition is skewed to basic and acidic residues.

It localises to the chromosome. It is found in the centromere. Its subcellular location is the kinetochore. The protein resides in the nucleus. The protein localises to the midbody. It localises to the cytoplasm. It is found in the cytoskeleton. Its subcellular location is the spindle. Functionally, may play a role in chromosome segregation. In Danio rerio (Zebrafish), this protein is FIGNL1-interacting regulator of recombination and mitosis.